We begin with the raw amino-acid sequence, 220 residues long: Large ribosomal subunit protein uL16z (220 aa).

The protein belongs to the universal ribosomal protein uL16 family. In terms of assembly, component of the small ribosomal subunit. Mature ribosomes consist of a small (40S) and a large (60S) subunit. The 40S subunit contains about 33 different proteins and 1 molecule of RNA (18S). The 60S subunit contains about 49 different proteins and 3 molecules of RNA (25S, 5.8S and 5S). Interacts with NIK1. Interacts with LIMYB. In terms of processing, phosphorylated by NIK1 and NIK2 in vitro. Ubiquitous, with the highest expression in flowers. Expressed in seedlings, leaves, roots, stems and flowers. Expressed in young leaves, mostly in dividing cells and in the hydathodes, in the root tips and lateral root primordia, in pistils, anthers, and pollen grains, and in developing seeds.

The protein resides in the cytoplasm. The protein localises to the nucleus. Its function is as follows. Ribosomal protein involved in translational regulation. Contribute to general translation under UV-B stress. Involved in the NIK1-mediated defense response to geminivirus infection. Acts coordinately with LIMYB as a transcriptional repressor. This chain is Large ribosomal subunit protein uL16z, found in Arabidopsis thaliana (Mouse-ear cress).